A 1835-amino-acid polypeptide reads, in one-letter code: Protein TIC 214 (1835 aa).

6 consecutive transmembrane segments (helical) span residues 25-45, 64-84, 87-107, 124-144, 172-192, and 221-241; these read VGLY…LFLL, FITG…HLAL, PHTI…WNNH, LSIQ…HFIL, VGWL…LFWI, and IFSI…PSPI. Basic and acidic residues predominate over residues 246–258; sequence LKETSETEERGES. 3 disordered regions span residues 246 to 304, 735 to 759, and 1535 to 1578; these read LKET…DGNQ, EFKT…KKEE, and NRNQ…KRQS. The span at 259–268 shows a compositional bias: acidic residues; the sequence is AEETDVEIET. The segment covering 1553 to 1569 has biased composition (basic and acidic residues); it reads PRNRQKDLEKDYAESDI.

Belongs to the TIC214 family. As to quaternary structure, part of the Tic complex.

Its subcellular location is the plastid. The protein localises to the chloroplast inner membrane. Functionally, involved in protein precursor import into chloroplasts. May be part of an intermediate translocation complex acting as a protein-conducting channel at the inner envelope. The polypeptide is Protein TIC 214 (Liriodendron tulipifera (Tuliptree)).